We begin with the raw amino-acid sequence, 156 residues long: Small ribosomal subunit protein uS7 (156 aa).

This sequence belongs to the universal ribosomal protein uS7 family. Part of the 30S ribosomal subunit. Contacts proteins S9 and S11.

In terms of biological role, one of the primary rRNA binding proteins, it binds directly to 16S rRNA where it nucleates assembly of the head domain of the 30S subunit. Is located at the subunit interface close to the decoding center, probably blocks exit of the E-site tRNA. The chain is Small ribosomal subunit protein uS7 from Metamycoplasma arthritidis (strain 158L3-1) (Mycoplasma arthritidis).